A 111-amino-acid polypeptide reads, in one-letter code: ESGGGLVQPGGSMKLSCVASGFTFSNYWMNWVRQSPEKGLEWVAEIRLKSGYATHYAESVKGRFTISRDDSKSSVYLQMNNLRAEDTGIYYCTRPGVPDYWGQGTTLTVSS.

An Ig-like domain is found at 1–110; it reads ESGGGLVQPG…WGQGTTLTVS (110 aa).

This Mus musculus (Mouse) protein is Ig heavy chain V-III region HPC76.